Reading from the N-terminus, the 368-residue chain is Meiotic driver wtf23 (368 aa).

The tract at residues 1-98 (MKNKYYPLRS…SSGTADNSST (98 aa)) is disordered. Basic and acidic residues predominate over residues 11-29 (SMDELSAKNDNEIDLEKGP). Polar residues-rich tracts occupy residues 57–72 (GANN…STTP) and 89–98 (SSGTADNSST). A run of 7 helical transmembrane segments spans residues 105–124 (FLSF…YLTY), 139–158 (YFGV…WYFY), 170–192 (IFLA…VISI), 202–221 (MIII…GCVK), 234–256 (STCT…FWTF), 266–283 (VFLL…TMFL), and 328–350 (GIAF…FRGG).

It belongs to the WTF family. In terms of assembly, homomer. Forms protein aggregates. The two isoforms can interact with each other and with themselves. High sequence similarity is required for their interaction.

The protein resides in the spore membrane. The protein localises to the vacuole membrane. It is found in the ascus epiplasm. Its subcellular location is the cytoplasm. It localises to the endoplasmic reticulum membrane. Promotes unequal transmission of alleles from the parental zygote to progeny spores by acting as poison/antidote system where the poison and antidote proteins are produced from the same locus; the poison component is trans-acting and targets all spores within an ascus whereas the antidote component is spore-specific, leading to poisoning of all progeny that do not inherit the allele. In terms of biological role, localizes isoform 2 to the vacuole thereby facilitating its degradation. Functionally, forms toxic aggregates that disrupt spore maturation. This Schizosaccharomyces pombe (strain 972 / ATCC 24843) (Fission yeast) protein is Meiotic driver wtf23.